The sequence spans 322 residues: Atrochrysone carboxyl ACP thioesterase nsrC (322 aa).

Zn(2+) is bound by residues histidine 105, histidine 107, aspartate 109, and histidine 110. Aspartate 109 (proton donor/acceptor) is an active-site residue.

This sequence belongs to the metallo-beta-lactamase superfamily. Requires Zn(2+) as cofactor.

The enzyme catalyses atrochrysone carboxyl-[ACP] + H2O = atrochrysone carboxylate + holo-[ACP] + H(+). Its pathway is secondary metabolite biosynthesis. Its function is as follows. Atrochrysone carboxyl ACP thioesterase; part of the gene cluster that mediates the biosynthesis of the tetrahydroxanthone dimer neosartorin, which exhibits antibacterial activity. The two different monomeric units appear to be synthesized by the same set of enzymes, among which the Baeyer-Villiger monooxygenase nsrF is the key enzyme for the divergence of the biosynthetic routes. The pathway begins with the synthesis of atrochrysone thioester by the polyketide synthase nsrB. The atrochrysone carboxyl ACP thioesterase nsrC then breaks the thioester bond and releases the atrochrysone carboxylic acid from AacuL. Atrochrysone carboxylic acid is decarboxylated by the decarboxylase nsrE, and oxidized by the anthrone oxygenase nsrD to yield emodin. Emodin is then reduced to emodin hydroquinone by the oxidoreductase nsrR. A-ring reduction by the short chain dehydrogenase nsrJ, dehydration by the scytalone dehydratase-like protein nsrI and probable spontaneous re-oxidation, results in overall deoxygenation to chrysophanol. The Baeyer-Villiger monooxygenase nsrF accepts chrysophanol as a substrate to insert one oxygen atom at two different positions to yield the precursors of both monomric units. NsrF is promiscuous/flexible in interacting with the 2 (non methylated and methylated) aromatic rings of chrysophanol, thus diverging the biosynthetic pathway at this point. After the hydrolysis of the lactones, methylesterification by the methyltransferase nsrG yields respectively moniliphenone and 2,2',6'-trihydroxy-4-methyl-6-methoxya-cyldiphenylmethanone. The next steps are the hydroxylation by the FAD-dependent monooxygenase nsrK, followed by isomerization by the monooxygenase nsrQ. The short chain dehydrogenase/reductase nsrO then catalyzes the C-5 ketoreduction to give the xanthone skeleton of blennolide C and 5-acetylblennolide A. The acetyltransferase nsrL has a strict substrate specificity and uses only blennolide A but not blennolide C to yield 5-acetylblennolide A as the single-acetylated product. In the final step of the biosynthesis, the heterodimerization of the 2 xanthones, blennolide C and 5-acetylblennolide A, is catalyzed by the cytochrome P450 monooxygenase nsrP. NsrP can utilize at least three different xanthones as its substrates to perform the dimerization reaction. The polypeptide is Atrochrysone carboxyl ACP thioesterase nsrC (Aspergillus novofumigatus (strain IBT 16806)).